A 170-amino-acid polypeptide reads, in one-letter code: Photosystem I assembly protein Ycf3 (170 aa).

3 TPR repeats span residues 35–68, 72–105, and 120–153; these read AFTYYRDGMLAQSEGNYAEALQNYYEAMRLEIDP, SYILYNIGLIHTSNGEHTKALEYYFRALERNPFL, and GEQAILQGDSEIAEAWFDQAAEYWKQAIALTPGN.

The protein belongs to the Ycf3 family.

The protein localises to the plastid. It is found in the chloroplast thylakoid membrane. In terms of biological role, essential for the assembly of the photosystem I (PSI) complex. May act as a chaperone-like factor to guide the assembly of the PSI subunits. The protein is Photosystem I assembly protein Ycf3 of Zea mays (Maize).